Consider the following 1141-residue polypeptide: MAAAVGVRGRYELPPCSGPGWLLSLSALLSVAARGAFATTHWVVTEDGKIQQQVDSPMNLKHPHDLVILMRQEATVNYLKELEKQLVAQKIHIEENEDRDTGLEQRHNKEDPDCIKAKVPLGDLDLYDGTYITLESKDISPEDYIDTESPVPPDPEQPDCTKILELPYSIHAFQHLRGVQERVNLSAPLLPKEDPIFTYLSKRLGRSIDDIGHLIHEGLQKNTSSWVLYNMASFYWRIKNEPYQVVECAMRALHFSSRHNKDIALVNLANVLHRAHFSADAAVVVHAALDDSDFFTSYYTLGNIYAMLGEYNHSVLCYDHALQARPGFEQAIKRKHAVLCQQKLEQKLEAQHRSLQRTLNELKEYQKQHDHYLRQQEILEKHKLIQEEQILRNIIHETQMAKEAQLGNHQICRLVNQQHSLHCQWDQPVRYHRGDIFENVDYVQFGEDSSTSSMMSVNFDVQSNQSDINDSVKSSPVAHSILWIWGRDSDAYRDKQHILWPKRADCTESYPRVPVGGELPTYFLPPENKGLRIHELSSDDYSTEEEAQTPDCSITDFRKSHTLSYLVKELEVRMDLKAKMPDDHARKILLSRINNYTIPEEEIGSFLFHAINKPNAPIWLILNEAGLYWRAVGNSTFAIACLQRALNLAPLQYQDVPLVNLANLLIHYGLHLDATKLLLQALAINSSEPLTFLSLGNAYLALKNISGALEAFRQALKLTTKCPECENSLKLIRCMQFYPFLYNITSSVCSGTVVEESNGSDEMENSDETKMSEEILALVDEFQQAWPLEGFGGALEMKGRRLDLQGIRVLKKGPQDGVARSSCYGDCRSEDDEATEWITFQVKRVKKPKGDHKKTPGKKVETGQIENGHRYQANLEITGPKVASPGPQGKKRDYQRLGWPSPDECLKLRWVELTAIVSTWLAVSSKNIDITEHIDFATPIQQPAMEPLCNGNLPTSMHTLDHLHGVSNRASLHYTGESQLTEVLQNLGKDQYPQQSLEQIGTRIAKVLEKNQTSWVLSSMAALYWRVKGQGKKAIDCLRQALHYAPHQMKDVPLISLANILHNAKLWNDAVIVATMAVEIAPHFAVNHFTLGNVYVAMEEFEKALVWYESTLKLQPEFVPAKNRIQTIQCHLMLKKGRRSP.

The stretch at 295–328 is one TPR 1 repeat; that stretch reads FTSYYTLGNIYAMLGEYNHSVLCYDHALQARPGF. Positions 340 to 382 form a coiled coil; sequence CQQKLEQKLEAQHRSLQRTLNELKEYQKQHDHYLRQQEILEKH. TPR repeat units follow at residues 619 to 652, 689 to 722, 1014 to 1048, 1051 to 1084, and 1085 to 1118; these read WLIL…APLQ, PLTF…TTKC, SWVL…APHQ, DVPL…APHF, and AVNH…QPEF.

The protein belongs to the TTC17 family. As to quaternary structure, interacts with CATIP. Expressed in germ cells as well as in somatic cells of the testis (at protein level).

It localises to the cytoplasm. The protein resides in the cell membrane. It is found in the cytoskeleton. In terms of biological role, plays a role in primary ciliogenesis by modulating actin polymerization. The chain is Tetratricopeptide repeat protein 17 (TTC17) from Homo sapiens (Human).